A 135-amino-acid chain; its full sequence is Ribosome-binding factor A (135 aa).

The protein belongs to the RbfA family. As to quaternary structure, monomer. Binds 30S ribosomal subunits, but not 50S ribosomal subunits or 70S ribosomes.

The protein localises to the cytoplasm. In terms of biological role, one of several proteins that assist in the late maturation steps of the functional core of the 30S ribosomal subunit. Associates with free 30S ribosomal subunits (but not with 30S subunits that are part of 70S ribosomes or polysomes). Required for efficient processing of 16S rRNA. May interact with the 5'-terminal helix region of 16S rRNA. This is Ribosome-binding factor A from Rhodopseudomonas palustris (strain HaA2).